The sequence spans 327 residues: Cyclin-A3-3 (327 aa).

The protein belongs to the cyclin family. Cyclin AB subfamily.

This is Cyclin-A3-3 (CYCA3-3) from Arabidopsis thaliana (Mouse-ear cress).